A 359-amino-acid polypeptide reads, in one-letter code: Cytohesin-interacting protein (359 aa).

Positions valine 77–threonine 166 constitute a PDZ domain. Residues glycine 165–lysine 188 adopt a coiled-coil conformation. Residues threonine 166–lysine 188 are interaction with CYTH1.

In terms of assembly, interacts with CYTH1 and SNX27.

It is found in the cytoplasm. The protein localises to the early endosome. By its binding to cytohesin-1 (CYTH1), it modifies activation of ARFs by CYTH1 and its precise function may be to sequester CYTH1 in the cytoplasm. This chain is Cytohesin-interacting protein (Cytip), found in Mus musculus (Mouse).